The following is a 222-amino-acid chain: Exosome complex component Rrp4 (222 aa).

The S1 motif domain occupies 63–131 (NDSVIGKVVD…EVKKVKLGLH (69 aa)). Residues 139-200 (EGGTLAYITP…EIVKRALEMI (62 aa)) form the KH domain.

It belongs to the RRP4 family. In terms of assembly, component of the archaeal exosome complex. Forms a trimer of Rrp4 and/or Csl4 subunits. The trimer associates with a hexameric ring-like arrangement composed of 3 Rrp41-Rrp42 heterodimers.

It is found in the cytoplasm. Non-catalytic component of the exosome, which is a complex involved in RNA degradation. Increases the RNA binding and the efficiency of RNA degradation. Confers strong poly(A) specificity to the exosome. This Methanothermus fervidus (strain ATCC 43054 / DSM 2088 / JCM 10308 / V24 S) protein is Exosome complex component Rrp4.